We begin with the raw amino-acid sequence, 322 residues long: MSKKIGILTSGGDAPGMNSAISFLAKSALSLGFEPYLIFDGYSGIIARKILPAKNFPYNGISSFGGTAIGSSRFPEFKKEEVQNKAVEILSEIGISSLVVVGGDGTYNGGYKLHLKGIKVIALPGTIDNDIQFTDYTIGFDTALNTIVETIDKLRDTANSHRRCFVVEVMGRHCQDLALYSAIATGSEILITNTNILTPEEVSQRVLEQFAKGKPSVIVTITENILPNLKEFAAKIEELTKISTRSLEVGHTQRGGRPSAFDRILAAKMAMKAMELINQDKSGLAISYLDGKIQTFDIAKVVSKPVRKTNDLVLEINKINQN.

Residues glycine 12, 73 to 74 (RF), and 103 to 106 (GDGT) each bind ATP. Aspartate 104 is a Mg(2+) binding site. 126 to 128 (TID) lines the substrate pocket. The active-site Proton acceptor is the aspartate 128. Arginine 155 contributes to the ADP binding site. Substrate-binding positions include arginine 163 and 170-172 (MGR). ADP contacts are provided by residues 186 to 188 (GSE), lysine 212, and 214 to 216 (KPS). Residues glutamate 223, arginine 245, and 251–254 (HTQR) contribute to the substrate site.

Belongs to the phosphofructokinase type A (PFKA) family. ATP-dependent PFK group I subfamily. Prokaryotic clade 'B1' sub-subfamily. As to quaternary structure, homotetramer. It depends on Mg(2+) as a cofactor.

It is found in the cytoplasm. It carries out the reaction beta-D-fructose 6-phosphate + ATP = beta-D-fructose 1,6-bisphosphate + ADP + H(+). It participates in carbohydrate degradation; glycolysis; D-glyceraldehyde 3-phosphate and glycerone phosphate from D-glucose: step 3/4. With respect to regulation, allosterically activated by ADP and other diphosphonucleosides, and allosterically inhibited by phosphoenolpyruvate. Catalyzes the phosphorylation of D-fructose 6-phosphate to fructose 1,6-bisphosphate by ATP, the first committing step of glycolysis. The chain is ATP-dependent 6-phosphofructokinase from Mesomycoplasma hyopneumoniae (strain 232) (Mycoplasma hyopneumoniae).